The sequence spans 449 residues: POU domain, class 5, transcription factor 1.1 (449 aa).

Disordered regions lie at residues 79-125 (ENNQ…SPPN) and 170-233 (YPTP…PSES). Over residues 97 to 110 (SRIKVKEEVVHETD) the composition is skewed to basic and acidic residues. Positions 170 to 180 (YPTPANQSPNT) are enriched in polar residues. Low complexity predominate over residues 187-199 (SSMESSRCSSTNS). Positions 224 to 233 (DNEEEVPSES) are enriched in acidic residues. One can recognise a POU-specific domain in the interval 227–301 (EEVPSESEME…FLERWVVEAE (75 aa)). The segment at residues 321–380 (KRKRRTNIENIVKGTLESYFMKCPKPGAQEMVQIAKELNMDKDVVRVWFCNRRQKGKRQG) is a DNA-binding region (homeobox).

Belongs to the POU transcription factor family. Class-5 subfamily. In terms of assembly, interacts with components of the transcription complex that assembles on the vent2-B gene, including vent2 (via C-terminus), smad1 and smad4. Forms a repression complex on the promoters of the gsc and mix2 genes via interactions with the nodal/activin signaling pathway transducers foxh1/fast1, gtf2ird1/wbscr11 and smad2. Forms a repression complex on the promoters of the nodal/nr1 and siamois genes with the maternal factors tcf7l1/tcf3 and vegt. Highly enriched within the animal half of developing embryos within ectodermal and mesodermal regions. Expressed in the neuroectoderm at the early neurula stage, with expression initially extending to the future hindbrain/midbrain boundary, but later shifting toward the posterior pole where it persists within the tip of the tail in hatching embryos. Expressed at very low levels in the adult kidney.

It localises to the nucleus. Its function is as follows. Transcription factor that binds to the octamer motif (5'-ATTTGCAT-3'). Activates transcription when directly bound to the octamer DNA sequence, but can form repression complexes with other proteins at the promoter site to inhibit transcription. Binds to the promoter of the vent2-B gene to activate transcription when in the presence of other BMP signaling factors also bound to the promoter. Inhibits the competence of ectodermal cells to respond to BMP during embryogenesis thereby inhibiting epidermal differentiation and promoting neural induction. Antagonizes the activity of nodal/activin signaling by forming a transcriptional repression complex on the gsc and mix2 gene promoters to inhibit their transcription, and thus maintain the undifferentiated state of embryonic cells to prevent them from differentiating prematurely. Acts maternally to inhibit vegt and beta-catenin-activated gene transcription by forming a transcriptional repression complex on the nodal/nr1 and siamois promoters to inhibit their transcription. In Xenopus laevis (African clawed frog), this protein is POU domain, class 5, transcription factor 1.1 (pou5f1.1).